A 432-amino-acid polypeptide reads, in one-letter code: MESSSECSSISDFQDSTEGDDANTLPENLCMREYVVICDYVATDNTQLSLCSGDKVLLLNAVSQDWWWVNHNGTCGYVPASHLHDALNEQEDTEVNDPWQDEEYYGSYKTLKLHLEMLSDVPRTMTYQNVILKNSSSLCGKHILDLGCGTGIISFFCAKFAQPEAVYAVEASKIAEQTCRLVEQNGISSLVHVIRQQAEELDLPTKVDVLVSEWMGTCLLFEFMLESVLQARDRWLKEDGVMWPSTACIHLVPCSAYKEYSNKVLFWDNPYQLDFSLLKPPATKEFFAKPQPDYILQPEDCLSEPCTLFHLNLKTLQVAELERMNCDFTFLVHTNGLLHGFTAWFSVQFENLEEQGHLELNTGPFSPLTHWKHTLFMLDEPLQVQKRDKISGSVVFERNSVWRRHMSVTLSWVISRELKMQKVGCKVFPIWR.

Low complexity predominate over residues 1-11 (MESSSECSSIS). Residues 1 to 22 (MESSSECSSISDFQDSTEGDDA) form a disordered region. In terms of domain architecture, SH3 spans 29–88 (LCMREYVVICDYVATDNTQLSLCSGDKVLLLNAVSQDWWWVNHNGTCGYVPASHLHDALN). Residues 101-405 (DEEYYGSYKT…FERNSVWRRH (305 aa)) form the SAM-dependent MTase PRMT-type domain. His114, Arg123, Gly147, Glu170, and Glu199 together coordinate S-adenosyl-L-methionine. Active-site residues include Glu213 and Glu222.

This sequence belongs to the class I-like SAM-binding methyltransferase superfamily. Protein arginine N-methyltransferase family. Interacts with ctnnb1.

It is found in the cytoplasm. The protein resides in the nucleus. It catalyses the reaction L-arginyl-[protein] + 2 S-adenosyl-L-methionine = N(omega),N(omega)-dimethyl-L-arginyl-[protein] + 2 S-adenosyl-L-homocysteine + 2 H(+). Arginine methyltransferase that methylates the guanidino nitrogens of arginyl residues in proteins such as histones. Involved in growth regulation. Involved in embryonic dorsal development. The chain is Protein arginine N-methyltransferase 2 (prmt2) from Xenopus laevis (African clawed frog).